We begin with the raw amino-acid sequence, 328 residues long: Malate dehydrogenase (328 aa).

Gly-11–Gly-17 serves as a coordination point for NAD(+). 2 residues coordinate substrate: Arg-94 and Arg-100. Residues Asn-107, Gln-114, and Val-131–Asn-133 each bind NAD(+). Substrate contacts are provided by Asn-133 and Arg-164. Catalysis depends on His-189, which acts as the Proton acceptor.

Belongs to the LDH/MDH superfamily. MDH type 2 family.

The enzyme catalyses (S)-malate + NAD(+) = oxaloacetate + NADH + H(+). In terms of biological role, catalyzes the reversible oxidation of malate to oxaloacetate. In Acinetobacter baumannii (strain AB0057), this protein is Malate dehydrogenase.